The primary structure comprises 256 residues: Small ribosomal subunit protein uS2 (256 aa).

It belongs to the universal ribosomal protein uS2 family.

The chain is Small ribosomal subunit protein uS2 from Brucella anthropi (strain ATCC 49188 / DSM 6882 / CCUG 24695 / JCM 21032 / LMG 3331 / NBRC 15819 / NCTC 12168 / Alc 37) (Ochrobactrum anthropi).